The following is a 662-amino-acid chain: Histidine decarboxylase (662 aa).

2 residues coordinate substrate: Y81 and H194. At K305 the chain carries N6-(pyridoxal phosphate)lysine.

The protein belongs to the group II decarboxylase family. Homodimer. It depends on pyridoxal 5'-phosphate as a cofactor.

It catalyses the reaction L-histidine + H(+) = histamine + CO2. Its pathway is amine and polyamine biosynthesis; histamine biosynthesis; histamine from L-histidine: step 1/1. Functionally, catalyzes the biosynthesis of histamine from histidine. This is Histidine decarboxylase (HDC) from Homo sapiens (Human).